The chain runs to 471 residues: Putative multidrug resistance protein MdtD (471 aa).

Topologically, residues 1–11 are periplasmic; that stretch reads MTDLPDSTRWQ. The helical transmembrane segment at 12-32 threads the bilayer; it reads LWIVAFGFFMQSLDTTIVNTA. Over 33-48 the chain is Cytoplasmic; it reads LPSMAQSLGESPLHMH. The helical transmembrane segment at 49 to 69 threads the bilayer; that stretch reads MVIVSYVLTVAVMLPASGWLA. Residues 70–76 lie on the Periplasmic side of the membrane; that stretch reads DKVGVRN. The helical transmembrane segment at 77 to 97 threads the bilayer; it reads IFFTAIVLFTLGSLFCALSGT. Residues 98 to 101 are Cytoplasmic-facing; sequence LNEL. Residues 102-124 form a helical membrane-spanning segment; that stretch reads LLARALQGVGGAMMVPVGRLTVM. The Periplasmic segment spans residues 125 to 137; it reads KIVPREQYMAAMT. The helical transmembrane segment at 138–158 threads the bilayer; it reads FVTLPGQVGPLLGPALGGLLV. The Cytoplasmic portion of the chain corresponds to 159–164; the sequence is EYASWH. Residues 165–185 form a helical membrane-spanning segment; the sequence is WIFLINIPVGIIGAIATLMLM. The Periplasmic segment spans residues 186–196; it reads PNYTMQTRRFD. A helical transmembrane segment spans residues 197–217; sequence LSGFLLLAVGMAVLTLALDGS. The Cytoplasmic portion of the chain corresponds to 218–224; it reads KGTGLSP. Residues 225-245 traverse the membrane as a helical segment; sequence LTIDGLVAVGVVALVLYLLHA. Residues 246-262 are Periplasmic-facing; sequence RNNNRALFSLKLFRTRT. A helical membrane pass occupies residues 263 to 283; sequence FSLGLAGSFAGRIGSGMLPFM. Over 284 to 285 the chain is Cytoplasmic; sequence TP. The helical transmembrane segment at 286–306 threads the bilayer; it reads VFLQIGLGFSPFHAGLMMIPM. Topologically, residues 307–341 are periplasmic; that stretch reads VLGSMGMKRIVVQVVNRFGYRRVLVATTLGLSLVT. Residues 342 to 362 form a helical membrane-spanning segment; sequence LLFMTTALLGWYYVLPFVLFL. The Cytoplasmic portion of the chain corresponds to 363-395; that stretch reads QGMVNSTRFSSMNTLTLKDLPDNLASSGNSLLS. Residues 396–416 traverse the membrane as a helical segment; it reads MIMQLSMSIGVTIAGLLLGLF. Residues 417–430 are Periplasmic-facing; it reads GSQHVSVDSGTTQT. The helical transmembrane segment at 431-451 threads the bilayer; that stretch reads VFMYTWLSMAFIIALPAFIFA. Topologically, residues 452–471 are cytoplasmic; it reads RVPNDTHQNVAISRRKRSAQ.

The protein belongs to the major facilitator superfamily. TCR/Tet family.

It localises to the cell inner membrane. The chain is Putative multidrug resistance protein MdtD from Escherichia coli O8 (strain IAI1).